A 750-amino-acid chain; its full sequence is Methylmalonyl-CoA mutase, mitochondrial (750 aa).

Residues 1 to 32 constitute a mitochondrion transit peptide; it reads MLRAKNQLFLLSPHYLRQVKESSGSRLIQQRL. Position 50 (Q50) interacts with malonyl-CoA. K89 carries the N6-acetyllysine modification. Malonyl-CoA-binding positions include 96 to 99 and 106 to 110; these read YPTM and TIRQY. Position 212 is an N6-acetyllysine (K212). Residues 216-218, R228, K255, H265, and 304-306 each bind malonyl-CoA; these read TIQ and RLS. K335 is modified (N6-acetyllysine). N6-succinyllysine is present on K343. Position 481 is a phosphoserine (S481). The residue at position 595 (K595) is an N6-succinyllysine. K602 carries the post-translational modification N6-acetyllysine. The region spanning 614–746 is the B12-binding domain; the sequence is RPRLLVAKMG…DDIEKCLEKK (133 aa). H627 serves as a coordination point for adenosylcob(III)alamin.

The protein belongs to the methylmalonyl-CoA mutase family. In terms of assembly, homodimer. Interacts (the apoenzyme form) with MMAA; the interaction is GTP dependent. The cofactor is adenosylcob(III)alamin.

It is found in the mitochondrion matrix. Its subcellular location is the mitochondrion. The protein localises to the cytoplasm. It catalyses the reaction (R)-methylmalonyl-CoA = succinyl-CoA. Inhibited by itaconyl-CoA, a metabolite that inactivates the coenzyme B12 cofactor. Catalyzes the reversible isomerization of methylmalonyl-CoA (MMCoA) (generated from branched-chain amino acid metabolism and degradation of dietary odd chain fatty acids and cholesterol) to succinyl-CoA (3-carboxypropionyl-CoA), a key intermediate of the tricarboxylic acid cycle. The chain is Methylmalonyl-CoA mutase, mitochondrial (MMUT) from Bos taurus (Bovine).